Here is a 566-residue protein sequence, read N- to C-terminus: APC/C activator protein CDH1 (566 aa).

Positions 1-18 are enriched in polar residues; the sequence is MSTNLNPFMNNTPSSSPL. Residues 1–56 form a disordered region; it reads MSTNLNPFMNNTPSSSPLKGSESKRVSKRPISSSSSASLLSSPSRRSRPSTVYGDR. Residues 29–44 show a composition bias toward low complexity; sequence RPISSSSSASLLSSPS. The C-box motif lies at 55-61; it reads DRYIPSR. S213 is subject to Phosphoserine. 7 WD repeats span residues 258 to 298, 300 to 339, 342 to 379, 383 to 422, 425 to 467, 469 to 510, and 513 to 552; these read PSLA…VVHL, DTENEYTSLSWIGAGSHLAVGQANGLVEIYDVMKRKCIRT, GHIDRVACLSWNNHVLTSGSRDHRILHRDVRMPDPFFE, SHTQEVCGLKWNVADNKLASGGNDNVVHVYEGTSKSPILT, EHKA…KMSD, DSGS…PIAI, and GHSFRVLHLTLSNDGTTVVSGAGDETLRYWKLFDKPKAKV.

It belongs to the WD repeat CDC20/Fizzy family. In terms of assembly, associates with the APC/C complex. Interacts with CLB2, CLB3, CDC5, HSL1, MSN5 and PSE1. Post-translationally, phosphorylated at multiple sites by CDC28, probably in its CLB5 bound form, in S, G2 and M phase of the cell cycle, thereby blocking the association of CDH1 to the APC/C and promoting nuclear export of CDH1 by MSN5. Dephosphorylated and activated by CDC14 in late anaphase, which may be necessary for PSE1-dependent nuclear localization.

The protein localises to the cytoplasm. It is found in the nucleus. Activator protein that regulates the ubiquitin ligase activity and substrate specificity of the anaphase promoting complex/cyclosome (APC/C). During telophase and in the subsequent G1 phase of the cell cycle, recognizes and binds proteins containing a destruction box (D-box) and an additional degradation signal termed the KEN box including ASE1, CDC20, the B-type cyclins CLB2 and CLB3, the polo-like kinase CDC5 and HSL1, and recruits them in a C-box-dependent manner to the APC/C for ubiquitination and subsequent proteolysis. Required for exit from mitosis, cytokinesis and formation of prereplicative complexes in G1. Probably is the target of a BUB2-dependent spindle checkpoint pathway. This is APC/C activator protein CDH1 (CDH1) from Saccharomyces cerevisiae (strain ATCC 204508 / S288c) (Baker's yeast).